The chain runs to 440 residues: ATP-dependent protease ATPase subunit HslU (440 aa).

Residues Ile-18, 60-65 (GVGKTE), Asp-252, Glu-318, and Arg-390 each bind ATP.

It belongs to the ClpX chaperone family. HslU subfamily. A double ring-shaped homohexamer of HslV is capped on each side by a ring-shaped HslU homohexamer. The assembly of the HslU/HslV complex is dependent on binding of ATP.

It localises to the cytoplasm. Its function is as follows. ATPase subunit of a proteasome-like degradation complex; this subunit has chaperone activity. The binding of ATP and its subsequent hydrolysis by HslU are essential for unfolding of protein substrates subsequently hydrolyzed by HslV. HslU recognizes the N-terminal part of its protein substrates and unfolds these before they are guided to HslV for hydrolysis. The sequence is that of ATP-dependent protease ATPase subunit HslU from Acidithiobacillus ferrooxidans (strain ATCC 23270 / DSM 14882 / CIP 104768 / NCIMB 8455) (Ferrobacillus ferrooxidans (strain ATCC 23270)).